The sequence spans 536 residues: ADP,ATP carrier protein 4 (536 aa).

The next 9 helical transmembrane spans lie at 44 to 64 (VLLF…LYVL), 77 to 97 (SILF…IVIV), 109 to 129 (MLEV…FVIW), 172 to 194 (TMLY…FSRA), 205 to 225 (KFLP…GLLT), 244 to 264 (FSQV…TSFF), 309 to 329 (VVAA…GIVL), 349 to 369 (AQII…THLI), and 378 to 398 (AITA…MVFF). Asn400 and Asn421 each carry an N-linked (GlcNAc...) asparagine glycan. The next 2 membrane-spanning stretches (helical) occupy residues 465–485 (LGIN…TVVF) and 493–513 (VVSV…RSIL).

This sequence belongs to the ADP/ATP translocase tlc family.

Its subcellular location is the cell membrane. In terms of biological role, ATP transporter involved in the uptake of ATP from the host cell cytoplasm. Provides the microsporidian cell with host ATP in exchange for ADP. This is an obligate exchange system. This energy acquiring activity is an important component of microsporidian parasitism. This Encephalitozoon cuniculi (strain GB-M1) (Microsporidian parasite) protein is ADP,ATP carrier protein 4 (NTT4).